Reading from the N-terminus, the 207-residue chain is Dephospho-CoA kinase (207 aa).

A DPCK domain is found at 4–203; it reads VIGLTGGIAS…EEGYIEKPNY (200 aa). Residue 12–17 coordinates ATP; it reads ASGKST.

It belongs to the CoaE family.

It is found in the cytoplasm. The catalysed reaction is 3'-dephospho-CoA + ATP = ADP + CoA + H(+). It functions in the pathway cofactor biosynthesis; coenzyme A biosynthesis; CoA from (R)-pantothenate: step 5/5. In terms of biological role, catalyzes the phosphorylation of the 3'-hydroxyl group of dephosphocoenzyme A to form coenzyme A. The protein is Dephospho-CoA kinase of Staphylococcus aureus (strain USA300).